Reading from the N-terminus, the 207-residue chain is Probable molybdenum cofactor guanylyltransferase (207 aa).

Residues leucine 9–glycine 11, lysine 21, and aspartate 97 each bind GTP. Position 97 (aspartate 97) interacts with Mg(2+).

The protein belongs to the MobA family. Mg(2+) serves as cofactor.

Its subcellular location is the cytoplasm. It carries out the reaction Mo-molybdopterin + GTP + H(+) = Mo-molybdopterin guanine dinucleotide + diphosphate. In terms of biological role, transfers a GMP moiety from GTP to Mo-molybdopterin (Mo-MPT) cofactor (Moco or molybdenum cofactor) to form Mo-molybdopterin guanine dinucleotide (Mo-MGD) cofactor. In Nostoc sp. (strain PCC 7120 / SAG 25.82 / UTEX 2576), this protein is Probable molybdenum cofactor guanylyltransferase.